The following is a 467-amino-acid chain: FK506-binding protein 4 (467 aa).

Disordered stretches follow at residues 64–163 (KATG…GDDD) and 208–357 (GNFV…KPTS). Acidic residues-rich tracts occupy residues 71–80 (DDDDEEEDEY), 147–163 (SDEEESDEESDCCGDDD), and 213–254 (PEDD…DELD). Basic and acidic residues-rich tracts occupy residues 271–287 (APKLVDTSKKGKKRPAE) and 312–332 (QKVEEAKKEEPKKETKSDKKV). The PPIase FKBP-type domain occupies 381–467 (GDRVGMRYIG…IFDVKLLEIK (87 aa)).

Belongs to the FKBP-type PPIase family. FKBP3/4 subfamily. In terms of assembly, binds to histones H3 and H4.

The protein localises to the nucleus. The catalysed reaction is [protein]-peptidylproline (omega=180) = [protein]-peptidylproline (omega=0). Inhibited by both FK506 and rapamycin. Functionally, PPIase that acts as a histone chaperone. Histone proline isomerase that increases the rate of cis-trans isomerization at prolines on the histone H3 N-terminal tail. Proline isomerization influences H3 methylation thereby regulating gene expression. This Neurospora crassa (strain ATCC 24698 / 74-OR23-1A / CBS 708.71 / DSM 1257 / FGSC 987) protein is FK506-binding protein 4 (fkr-4).